We begin with the raw amino-acid sequence, 415 residues long: Putative competence-damage inducible protein (415 aa).

The protein belongs to the CinA family.

This chain is Putative competence-damage inducible protein, found in Limosilactobacillus reuteri (strain DSM 20016) (Lactobacillus reuteri).